The following is a 212-amino-acid chain: MTDKIVTAEEMRHYDFYTINTIGIPSLVLMERAALAVRDEILHAFPIALKDVVVVAGSGNNGGDGIAIARLLHIAGVHVTILNIGNPQHASAEHQTQEKIAQYYQIPETSDLAVLNKATLIVDAMFGIGIDRAVKGAYADAINAINNTDAVVVAVDMPSGVNTDTGEVMGTAVRATTTVTFAYNKVGLTKNDGKDYAGNVVVANDMGTYAVD.

The 202-residue stretch at 11–212 (MRHYDFYTIN…ANDMGTYAVD (202 aa)) folds into the YjeF N-terminal domain. Position 60–64 (60–64 (NNGGD)) interacts with (6S)-NADPHX. K(+) is bound by residues Asn61 and Asp123. Residues 127–133 (GIGIDRA), Tyr138, and Asp156 contribute to the (6S)-NADPHX site. Ser159 contacts K(+).

This sequence belongs to the NnrE/AIBP family. K(+) is required as a cofactor.

It carries out the reaction (6R)-NADHX = (6S)-NADHX. The catalysed reaction is (6R)-NADPHX = (6S)-NADPHX. In terms of biological role, catalyzes the epimerization of the S- and R-forms of NAD(P)HX, a damaged form of NAD(P)H that is a result of enzymatic or heat-dependent hydration. This is a prerequisite for the S-specific NAD(P)H-hydrate dehydratase to allow the repair of both epimers of NAD(P)HX. This Limosilactobacillus reuteri (strain DSM 20016) (Lactobacillus reuteri) protein is NAD(P)H-hydrate epimerase.